The following is a 129-amino-acid chain: Phosphoribosyl-AMP cyclohydrolase (129 aa).

Residue Asp87 participates in Mg(2+) binding. Zn(2+) is bound at residue Cys88. 2 residues coordinate Mg(2+): Asp89 and Asp91. Zn(2+)-binding residues include Cys104 and Cys111.

The protein belongs to the PRA-CH family. As to quaternary structure, homodimer. Mg(2+) serves as cofactor. It depends on Zn(2+) as a cofactor.

The protein resides in the cytoplasm. It catalyses the reaction 1-(5-phospho-beta-D-ribosyl)-5'-AMP + H2O = 1-(5-phospho-beta-D-ribosyl)-5-[(5-phospho-beta-D-ribosylamino)methylideneamino]imidazole-4-carboxamide. Its pathway is amino-acid biosynthesis; L-histidine biosynthesis; L-histidine from 5-phospho-alpha-D-ribose 1-diphosphate: step 3/9. Functionally, catalyzes the hydrolysis of the adenine ring of phosphoribosyl-AMP. This Ruegeria sp. (strain TM1040) (Silicibacter sp.) protein is Phosphoribosyl-AMP cyclohydrolase.